A 268-amino-acid chain; its full sequence is Octanoyltransferase (268 aa).

The 189-residue stretch at 49 to 237 (GTQGDVILVV…ALLKALSGEL (189 aa)) folds into the BPL/LPL catalytic domain. Substrate contacts are provided by residues 87–94 (RGGRITWH), 167–169 (ALG), and 180–182 (GLA). The Acyl-thioester intermediate role is filled by Cys-198.

It belongs to the LipB family.

It is found in the cytoplasm. It carries out the reaction octanoyl-[ACP] + L-lysyl-[protein] = N(6)-octanoyl-L-lysyl-[protein] + holo-[ACP] + H(+). Its pathway is protein modification; protein lipoylation via endogenous pathway; protein N(6)-(lipoyl)lysine from octanoyl-[acyl-carrier-protein]: step 1/2. Its function is as follows. Catalyzes the transfer of endogenously produced octanoic acid from octanoyl-acyl-carrier-protein onto the lipoyl domains of lipoate-dependent enzymes. Lipoyl-ACP can also act as a substrate although octanoyl-ACP is likely to be the physiological substrate. This is Octanoyltransferase from Corynebacterium aurimucosum (strain ATCC 700975 / DSM 44827 / CIP 107346 / CN-1) (Corynebacterium nigricans).